The sequence spans 240 residues: Seed lectin (240 aa).

N111 carries N-linked (GlcNAc...) asparagine glycosylation. Positions 123 and 125 each coordinate Mn(2+). Residues D125, N129, and D132 each coordinate Ca(2+). Positions 132 and 137 each coordinate Mn(2+). Residue N183 is glycosylated (N-linked (GlcNAc...) asparagine).

This sequence belongs to the leguminous lectin family. Homotetramer. Partially N-glycosylated at Asn-111 and Asn-183 with the heptasaccharide [(beta-xylosyl-1,2)(alpha-mannosyl-1,6)(alpha-mannosyl-1,3)]beta-manosyl-1,4-GlcNAC-beta-1,4-GlcNAc-beta-1,4 [alpha-fucosyl-1,3]GlcNAc. A small proportion of alpha chains are proteolytically cleaved at 114-115 into gamma and beta chains. This is probably dependent on the deglycosylation of Asn-111. In terms of tissue distribution, seed.

Functionally, lectin that binds galactose. This Vatairea macrocarpa protein is Seed lectin.